Reading from the N-terminus, the 213-residue chain is GTP cyclohydrolase 1 (213 aa).

The segment at 1 to 27 (MDDVVKSLLQRTTSSLTKPAPARPSRE) is disordered. Cys-100, His-103, and Cys-172 together coordinate Zn(2+).

It belongs to the GTP cyclohydrolase I family. As to quaternary structure, homomer.

It carries out the reaction GTP + H2O = 7,8-dihydroneopterin 3'-triphosphate + formate + H(+). It functions in the pathway cofactor biosynthesis; 7,8-dihydroneopterin triphosphate biosynthesis; 7,8-dihydroneopterin triphosphate from GTP: step 1/1. This chain is GTP cyclohydrolase 1, found in Beijerinckia indica subsp. indica (strain ATCC 9039 / DSM 1715 / NCIMB 8712).